We begin with the raw amino-acid sequence, 101 residues long: RNA silencing suppressor (101 aa).

A basic region spans residues R47–R50. Residues C57–C78 form a C4-type zinc finger.

The protein belongs to the carlaviruses nucleic acid-binding protein family.

Its function is as follows. Suppressor of viral-induced RNA silencing. The potential mechanism of action is based on sequestering siRNAs. The chain is RNA silencing suppressor (TUC) from Dianthus caryophyllus (Carnation).